The primary structure comprises 465 residues: Methylenetetrahydrofolate--tRNA-(uracil-5-)-methyltransferase TrmFO (465 aa).

An FAD-binding site is contributed by 3–8 (GAGLAG).

It belongs to the MnmG family. TrmFO subfamily. It depends on FAD as a cofactor.

It is found in the cytoplasm. It catalyses the reaction uridine(54) in tRNA + (6R)-5,10-methylene-5,6,7,8-tetrahydrofolate + NADH + H(+) = 5-methyluridine(54) in tRNA + (6S)-5,6,7,8-tetrahydrofolate + NAD(+). The catalysed reaction is uridine(54) in tRNA + (6R)-5,10-methylene-5,6,7,8-tetrahydrofolate + NADPH + H(+) = 5-methyluridine(54) in tRNA + (6S)-5,6,7,8-tetrahydrofolate + NADP(+). Catalyzes the folate-dependent formation of 5-methyl-uridine at position 54 (M-5-U54) in all tRNAs. The sequence is that of Methylenetetrahydrofolate--tRNA-(uracil-5-)-methyltransferase TrmFO from Bradyrhizobium sp. (strain ORS 278).